Consider the following 156-residue polypeptide: UPF0523 protein C (156 aa).

It belongs to the UPF0523 family.

This chain is UPF0523 protein C, found in Dictyostelium discoideum (Social amoeba).